A 446-amino-acid chain; its full sequence is Glutamyl-tRNA reductase (446 aa).

Residues 49–52, Ser-109, 114–116, and Gln-120 each bind substrate; these read TCNR and ETQ. Cys-50 (nucleophile) is an active-site residue. 189-194 lines the NADP(+) pocket; sequence GAGEMA.

Belongs to the glutamyl-tRNA reductase family. In terms of assembly, homodimer.

The catalysed reaction is (S)-4-amino-5-oxopentanoate + tRNA(Glu) + NADP(+) = L-glutamyl-tRNA(Glu) + NADPH + H(+). It participates in porphyrin-containing compound metabolism; protoporphyrin-IX biosynthesis; 5-aminolevulinate from L-glutamyl-tRNA(Glu): step 1/2. Catalyzes the NADPH-dependent reduction of glutamyl-tRNA(Glu) to glutamate 1-semialdehyde (GSA). The protein is Glutamyl-tRNA reductase of Macrococcus caseolyticus (strain JCSC5402) (Macrococcoides caseolyticum).